Consider the following 104-residue polypeptide: Large ribosomal subunit protein uL23 (104 aa).

It belongs to the universal ribosomal protein uL23 family. As to quaternary structure, part of the 50S ribosomal subunit. Contacts protein L29, and trigger factor when it is bound to the ribosome.

Its function is as follows. One of the early assembly proteins it binds 23S rRNA. One of the proteins that surrounds the polypeptide exit tunnel on the outside of the ribosome. Forms the main docking site for trigger factor binding to the ribosome. This is Large ribosomal subunit protein uL23 from Polynucleobacter necessarius subsp. necessarius (strain STIR1).